The chain runs to 560 residues: Membrane protein insertase YidC (560 aa).

A run of 6 helical transmembrane segments spans residues 5–25, 334–354, 357–377, 431–451, 476–496, and 522–542; these read IINL…WQYF, AIDF…MNFF, YVGN…LLMF, LPIL…YVTI, LFGL…WPIL, and FMPL…LIYW.

It belongs to the OXA1/ALB3/YidC family. Type 1 subfamily. Interacts with the Sec translocase complex via SecD. Specifically interacts with transmembrane segments of nascent integral membrane proteins during membrane integration.

Its subcellular location is the cell inner membrane. Functionally, required for the insertion and/or proper folding and/or complex formation of integral membrane proteins into the membrane. Involved in integration of membrane proteins that insert both dependently and independently of the Sec translocase complex, as well as at least some lipoproteins. Aids folding of multispanning membrane proteins. In Rickettsia africae (strain ESF-5), this protein is Membrane protein insertase YidC.